A 610-amino-acid chain; its full sequence is Calmegin (610 aa).

The N-terminal stretch at 1 to 19 is a signal peptide; it reads MHFQAFWLCLGLLFISINA. Over 20–471 the chain is Lumenal; the sequence is EFMDDDVETE…LMAAAEGHPW (452 aa). Lys-128 bears the N6-acetyllysine mark. Cys-151 and Cys-185 are oxidised to a cystine. Positions 258-338 are disordered; sequence VPPIKPPKEI…KPDDWNEDTD (81 aa). The segment covering 263-284 has biased composition (basic and acidic residues); it reads PPKEIEDPNDKKPEEWDERAKI. Tandem repeats lie at residues 267–280, 284–297, 303–316, 322–335, 339–352, 356–369, 370–383, and 384–397. A compositionally biased stretch (basic and acidic residues) spans 317 to 332; the sequence is DEPKFIPDPNAEKPDD. The interval 317–350 is interaction with PPIB; that stretch reads DEPKFIPDPNAEKPDDWNEDTDGEWEAPQILNPA. Cys-351 and Cys-355 are oxidised to a cystine. The chain crosses the membrane as a helical span at residues 472-492; it reads LWLIYLVTAGVPIALITSFCW. Topologically, residues 493–610 are cytoplasmic; the sequence is PRKVKKKHKD…SVRKRRVRKD (118 aa). Residues 521 to 548 show a composition bias toward basic and acidic residues; it reads QEEKEEKAALEKPMDLEEEKKQNDGEML. Residues 521 to 610 form a disordered region; sequence QEEKEEKAAL…SVRKRRVRKD (90 aa). Over residues 549–571 the composition is skewed to acidic residues; the sequence is EKEEESEPEEKSEEEIEIIEGQE. A phosphoserine mark is found at Ser-560, Ser-576, Ser-579, Ser-581, Ser-591, Ser-594, and Ser-601. Basic residues predominate over residues 601 to 610; sequence SVRKRRVRKD.

Belongs to the calreticulin family. As to quaternary structure, interacts with PPIB. Interacts with ADAM2. Interacts with PDILT. Detected in testis (at protein level). Detected in testis.

The protein resides in the endoplasmic reticulum membrane. Functionally, functions during spermatogenesis as a chaperone for a range of client proteins that are important for sperm adhesion onto the egg zona pellucida and for subsequent penetration of the zona pellucida. Required for normal sperm migration from the uterus into the oviduct. Required for normal male fertility. Binds calcium ions. The sequence is that of Calmegin (CLGN) from Homo sapiens (Human).